The following is a 453-amino-acid chain: tRNA modification GTPase MnmE (453 aa).

Arg22, Glu79, and Lys119 together coordinate (6S)-5-formyl-5,6,7,8-tetrahydrofolate. Residues 215–376 (GMKVVIAGRP…LREHLKACMG (162 aa)) form the TrmE-type G domain. Position 225 (Asn225) interacts with K(+). GTP-binding positions include 225 to 230 (NAGKSS), 244 to 250 (TEIAGTT), 269 to 272 (DTAG), and 334 to 337 (NKAD). Ser229 contacts Mg(2+). Positions 244, 246, and 249 each coordinate K(+). Thr250 is a binding site for Mg(2+). Residue Lys453 participates in (6S)-5-formyl-5,6,7,8-tetrahydrofolate binding.

This sequence belongs to the TRAFAC class TrmE-Era-EngA-EngB-Septin-like GTPase superfamily. TrmE GTPase family. In terms of assembly, homodimer. Heterotetramer of two MnmE and two MnmG subunits. K(+) serves as cofactor.

It localises to the cytoplasm. In terms of biological role, exhibits a very high intrinsic GTPase hydrolysis rate. Involved in the addition of a carboxymethylaminomethyl (cmnm) group at the wobble position (U34) of certain tRNAs, forming tRNA-cmnm(5)s(2)U34. The protein is tRNA modification GTPase MnmE of Aeromonas hydrophila subsp. hydrophila (strain ATCC 7966 / DSM 30187 / BCRC 13018 / CCUG 14551 / JCM 1027 / KCTC 2358 / NCIMB 9240 / NCTC 8049).